We begin with the raw amino-acid sequence, 317 residues long: UAP56-interacting factor (317 aa).

The residue at position 1 (Met-1) is an N-acetylmethionine. The interval 1–23 is disordered; sequence MNRFGTRLVGATATTPPAPKARS. Residue Thr-14 is modified to Phosphothreonine. At Ser-23 the chain carries Phosphoserine. The UAP56-binding motif motif lies at 26–44; the sequence is NLDKIDMSLDEIIKLNRKE. A phosphoserine mark is found at Ser-60 and Ser-117. Lys-139 participates in a covalent cross-link: Glycyl lysine isopeptide (Lys-Gly) (interchain with G-Cter in SUMO1). Lys-260 is covalently cross-linked (Glycyl lysine isopeptide (Lys-Gly) (interchain with G-Cter in SUMO2)).

This sequence belongs to the UIF family. In terms of assembly, interacts with DDX39B/UAP56 and NXF1; interaction with DDX39B/UAP56 and NXF1 are mutually exclusive. Interacts with SSRP1; required for its recruitment to mRNAs. Interacts with CHTOP.

The protein resides in the nucleus. It localises to the nucleoplasm. The protein localises to the nucleus speckle. Its function is as follows. Required for mRNA export from the nucleus to the cytoplasm. Acts as an adapter that uses the DDX39B/UAP56-NFX1 pathway to ensure efficient mRNA export and delivering to the nuclear pore. Associates with spliced and unspliced mRNAs simultaneously with ALYREF/THOC4. The sequence is that of UAP56-interacting factor (Fyttd1) from Rattus norvegicus (Rat).